Reading from the N-terminus, the 347-residue chain is Phenylalanine--tRNA ligase alpha subunit (347 aa).

Residues 83–111 (QNLSGGDDSGADPTFDPTLPGTRPSLGHI) are disordered. Glu-274 lines the Mg(2+) pocket.

It belongs to the class-II aminoacyl-tRNA synthetase family. Phe-tRNA synthetase alpha subunit type 1 subfamily. Tetramer of two alpha and two beta subunits. Mg(2+) serves as cofactor.

It is found in the cytoplasm. The catalysed reaction is tRNA(Phe) + L-phenylalanine + ATP = L-phenylalanyl-tRNA(Phe) + AMP + diphosphate + H(+). This is Phenylalanine--tRNA ligase alpha subunit from Rhodopirellula baltica (strain DSM 10527 / NCIMB 13988 / SH1).